A 369-amino-acid polypeptide reads, in one-letter code: 3-dehydroquinate synthase (369 aa).

Residues 80 to 85 (DGEQYK), 114 to 118 (GVIGD), 138 to 139 (TT), lysine 151, lysine 160, and 178 to 181 (TLKT) contribute to the NAD(+) site. Residues glutamate 193, histidine 256, and histidine 273 each contribute to the Zn(2+) site.

Belongs to the sugar phosphate cyclases superfamily. Dehydroquinate synthase family. Co(2+) serves as cofactor. Requires Zn(2+) as cofactor. The cofactor is NAD(+).

The protein localises to the cytoplasm. The catalysed reaction is 7-phospho-2-dehydro-3-deoxy-D-arabino-heptonate = 3-dehydroquinate + phosphate. The protein operates within metabolic intermediate biosynthesis; chorismate biosynthesis; chorismate from D-erythrose 4-phosphate and phosphoenolpyruvate: step 2/7. Catalyzes the conversion of 3-deoxy-D-arabino-heptulosonate 7-phosphate (DAHP) to dehydroquinate (DHQ). The chain is 3-dehydroquinate synthase from Psychrobacter cryohalolentis (strain ATCC BAA-1226 / DSM 17306 / VKM B-2378 / K5).